The sequence spans 227 residues: Zeamatin (227 aa).

The signal sequence occupies residues 1 to 20 (MAGSVAIVGIFVALLAVAGE). 8 cysteine pairs are disulfide-bonded: C30–C226, C72–C82, C87–C93, C139–C215, C145–C198, C153–C163, C167–C176, and C177–C185.

It belongs to the thaumatin family.

In terms of biological role, has antifungal activity. Inhibits Candida albicans and Trichoderma reesei; marginal inhibition observed against Alternaria solani and Neurospora crassa. This Zea mays (Maize) protein is Zeamatin (Zlp).